The chain runs to 469 residues: uncharacterized protein (469 aa).

This is an uncharacterized protein from Methanocaldococcus jannaschii (strain ATCC 43067 / DSM 2661 / JAL-1 / JCM 10045 / NBRC 100440) (Methanococcus jannaschii).